We begin with the raw amino-acid sequence, 130 residues long: UPF0225 protein CE1570 (130 aa).

It belongs to the UPF0225 family.

The polypeptide is UPF0225 protein CE1570 (Corynebacterium efficiens (strain DSM 44549 / YS-314 / AJ 12310 / JCM 11189 / NBRC 100395)).